Reading from the N-terminus, the 109-residue chain is RNA-binding protein Hfq (109 aa).

Residues 9 to 68 (DPFLNALRKEKVSVSVYLVNGIKLQGQVEAFDQFCIVLRNTVNQMVYKHAISTIVPAKSV) enclose the Sm domain. The disordered stretch occupies residues 77–109 (PYHQNSNDEQDENVDDIHSDDLEIQENEGNIHE).

It belongs to the Hfq family. Homohexamer.

Its function is as follows. RNA chaperone that binds small regulatory RNA (sRNAs) and mRNAs to facilitate mRNA translational regulation in response to envelope stress, environmental stress and changes in metabolite concentrations. Also binds with high specificity to tRNAs. The chain is RNA-binding protein Hfq from Francisella tularensis subsp. holarctica (strain FTNF002-00 / FTA).